A 799-amino-acid polypeptide reads, in one-letter code: Oligopeptide transporter 1 (799 aa).

Disordered regions lie at residues Met-1–Ile-26 and Asp-43–Asp-64. Over Met-1–Arg-108 the chain is Extracellular. Residues Ser-13 to Ile-26 show a composition bias toward low complexity. Asn-46 carries an N-linked (GlcNAc...) asparagine glycan. Phosphothreonine occurs at positions 48, 50, and 51. The chain crosses the membrane as a helical span at residues Thr-109–Leu-129. Over Arg-130–Glu-135 the chain is Cytoplasmic. A helical transmembrane segment spans residues Ile-136–Pro-156. Residues Asp-157–Glu-177 are Extracellular-facing. A helical membrane pass occupies residues His-178–Leu-198. At Asn-199–Asn-210 the chain is on the cytoplasmic side. Residues Val-211 to Leu-231 form a helical membrane-spanning segment. The Extracellular segment spans residues Thr-232–Arg-276. The chain crosses the membrane as a helical span at residues Phe-277–Thr-297. Over Gly-298–His-313 the chain is Cytoplasmic. Residues Asn-314–Phe-334 traverse the membrane as a helical segment. At Asp-335–Tyr-359 the chain is on the extracellular side. Residues Ala-360–Tyr-380 traverse the membrane as a helical segment. At Ala-381 to Tyr-428 the chain is on the cytoplasmic side. The helical transmembrane segment at Leu-429–Tyr-449 threads the bilayer. The Extracellular segment spans residues His-450–Asp-482. Residues Trp-483–Phe-503 form a helical membrane-spanning segment. The Cytoplasmic portion of the chain corresponds to Asp-504–Pro-508. The chain crosses the membrane as a helical span at residues Ala-509 to Leu-529. The Extracellular segment spans residues Glu-530–Asn-540. Residues Ile-541–Phe-561 form a helical membrane-spanning segment. The Cytoplasmic portion of the chain corresponds to Lys-562–Arg-590. The chain crosses the membrane as a helical span at residues Leu-591–Gln-611. Topologically, residues Glu-612–Asn-659 are extracellular. Asn-640 is a glycosylation site (N-linked (GlcNAc...) asparagine). The helical transmembrane segment at Pro-660 to Trp-680 threads the bilayer. Residues Lys-681–Asn-736 lie on the Cytoplasmic side of the membrane. Residues Phe-737–Cys-757 form a helical membrane-spanning segment. The Extracellular portion of the chain corresponds to Val-758–Trp-799.

Belongs to the oligopeptide OPT transporter family.

It localises to the cell membrane. Functionally, high affinity transporter for glutathione. Also transports tetra- and pentapeptides like the opioids leucine enkephalin (Tyr-Gly-Gly-Phe-Leu) and methionine enkephalin (Tyr-Gly-Gly_Phe-Met) across the cell membrane. This Saccharomyces cerevisiae (strain ATCC 204508 / S288c) (Baker's yeast) protein is Oligopeptide transporter 1 (OPT1).